The primary structure comprises 799 residues: Valine--tRNA ligase (799 aa).

ATP is bound at residue Lys536.

It belongs to the class-I aminoacyl-tRNA synthetase family. ValS type 2 subfamily.

It is found in the cytoplasm. It catalyses the reaction tRNA(Val) + L-valine + ATP = L-valyl-tRNA(Val) + AMP + diphosphate. Catalyzes the attachment of valine to tRNA(Val). As ValRS can inadvertently accommodate and process structurally similar amino acids such as threonine, to avoid such errors, it has a 'posttransfer' editing activity that hydrolyzes mischarged Thr-tRNA(Val) in a tRNA-dependent manner. This is Valine--tRNA ligase (valS) from Pyrobaculum aerophilum (strain ATCC 51768 / DSM 7523 / JCM 9630 / CIP 104966 / NBRC 100827 / IM2).